The following is a 265-amino-acid chain: 3-methyl-2-oxobutanoate hydroxymethyltransferase (265 aa).

Mg(2+)-binding residues include D45 and D84. Residues 45–46, D84, and K112 contribute to the 3-methyl-2-oxobutanoate site; that span reads DS. E114 is a Mg(2+) binding site. E181 (proton acceptor) is an active-site residue.

Belongs to the PanB family. As to quaternary structure, homodecamer; pentamer of dimers. Mg(2+) is required as a cofactor.

The protein localises to the cytoplasm. It catalyses the reaction 3-methyl-2-oxobutanoate + (6R)-5,10-methylene-5,6,7,8-tetrahydrofolate + H2O = 2-dehydropantoate + (6S)-5,6,7,8-tetrahydrofolate. Its pathway is cofactor biosynthesis; (R)-pantothenate biosynthesis; (R)-pantoate from 3-methyl-2-oxobutanoate: step 1/2. In terms of biological role, catalyzes the reversible reaction in which hydroxymethyl group from 5,10-methylenetetrahydrofolate is transferred onto alpha-ketoisovalerate to form ketopantoate. The protein is 3-methyl-2-oxobutanoate hydroxymethyltransferase of Wigglesworthia glossinidia brevipalpis.